We begin with the raw amino-acid sequence, 74 residues long: Protein sok (74 aa).

Residues 26 to 45 are disordered; it reads TQHGNKPPSRHEAESLKRRA.

The sequence is that of Protein sok (sok) from Escherichia coli.